A 951-amino-acid polypeptide reads, in one-letter code: Glycine dehydrogenase (decarboxylating) 1 (951 aa).

The residue at position 703 (Lys-703) is an N6-(pyridoxal phosphate)lysine.

This sequence belongs to the GcvP family. In terms of assembly, the glycine cleavage system is composed of four proteins: P, T, L and H. Pyridoxal 5'-phosphate is required as a cofactor.

It carries out the reaction N(6)-[(R)-lipoyl]-L-lysyl-[glycine-cleavage complex H protein] + glycine + H(+) = N(6)-[(R)-S(8)-aminomethyldihydrolipoyl]-L-lysyl-[glycine-cleavage complex H protein] + CO2. Functionally, the glycine cleavage system catalyzes the degradation of glycine. The P protein binds the alpha-amino group of glycine through its pyridoxal phosphate cofactor; CO(2) is released and the remaining methylamine moiety is then transferred to the lipoamide cofactor of the H protein. This Pseudomonas putida (strain ATCC 47054 / DSM 6125 / CFBP 8728 / NCIMB 11950 / KT2440) protein is Glycine dehydrogenase (decarboxylating) 1 (gcvP1).